The sequence spans 246 residues: tRNA pseudouridine synthase B (246 aa).

Catalysis depends on aspartate 44, which acts as the Nucleophile.

The protein belongs to the pseudouridine synthase TruB family. Type 1 subfamily.

It catalyses the reaction uridine(55) in tRNA = pseudouridine(55) in tRNA. In terms of biological role, responsible for synthesis of pseudouridine from uracil-55 in the psi GC loop of transfer RNAs. The polypeptide is tRNA pseudouridine synthase B (Desulfotalea psychrophila (strain LSv54 / DSM 12343)).